Reading from the N-terminus, the 243-residue chain is Small ribosomal subunit protein uS5 (243 aa).

Residues 1-10 (MSDNETKETQ) show a composition bias toward basic and acidic residues. Residues 1–50 (MSDNETKETQVAEETQNTVATESNNEDRKGRRGQRGEGRRGERRNRREEN) are disordered. Residues 12 to 23 (AEETQNTVATES) are compositionally biased toward polar residues. Residues 25-50 (NEDRKGRRGQRGEGRRGERRNRREEN) are compositionally biased toward basic and acidic residues. The S5 DRBM domain occupies 55-118 (LLDRVVTINR…LDAKKHMFSV (64 aa)).

It belongs to the universal ribosomal protein uS5 family. Part of the 30S ribosomal subunit. Contacts proteins S4 and S8.

In terms of biological role, with S4 and S12 plays an important role in translational accuracy. Functionally, located at the back of the 30S subunit body where it stabilizes the conformation of the head with respect to the body. The protein is Small ribosomal subunit protein uS5 of Bifidobacterium longum (strain DJO10A).